Reading from the N-terminus, the 166-residue chain is Large ribosomal subunit protein uL10 (166 aa).

It belongs to the universal ribosomal protein uL10 family. As to quaternary structure, part of the ribosomal stalk of the 50S ribosomal subunit. The N-terminus interacts with L11 and the large rRNA to form the base of the stalk. The C-terminus forms an elongated spine to which L12 dimers bind in a sequential fashion forming a multimeric L10(L12)X complex.

Its function is as follows. Forms part of the ribosomal stalk, playing a central role in the interaction of the ribosome with GTP-bound translation factors. The protein is Large ribosomal subunit protein uL10 of Shewanella baltica (strain OS223).